The primary structure comprises 388 residues: Pectin acetylesterase 1 (388 aa).

The signal sequence occupies residues 1–24 (MKTLLYWGWSSLAGLILFSILAHG). Asn-30 and Asn-33 each carry an N-linked (GlcNAc...) asparagine glycan. Active-site charge relay system residues include Ser-187 and Asp-283. Asn-304 carries an N-linked (GlcNAc...) asparagine glycan. His-349 acts as the Charge relay system in catalysis.

This sequence belongs to the pectinacetylesterase family.

It is found in the secreted. It localises to the cell wall. Functionally, hydrolyzes acetyl esters in homogalacturonan regions of pectin. In type I primary cell wall, galacturonic acid residues of pectin can be acetylated at the O-2 and O-3 positions. Decreasing the degree of acetylation of pectin gels in vitro alters their physical properties. The protein is Pectin acetylesterase 1 of Arabidopsis thaliana (Mouse-ear cress).